We begin with the raw amino-acid sequence, 346 residues long: MSDNIRLTQFSHGAGUGCKISPKVLGTILQSELDKFVDPKLLVGNETADDAAVYDIGNGLAIISTTDFFMPIVDDPFDFGRIAATNALSDIFAMGGKPLMAIAILGFPIDKLPAEVAQKIIEGGRFACQQAGIVLAGGHSIHSMEPIFGLAVTGMAAIEHIKRNASATAGCELFLTKPLGIGILTTAEKRGLLTLPHQHLVRDLMCQLNTIGTLLAPLPEMTAMTDITGFGLLGHLSEICQASNVRAEINSHAVKVIDGVEEYVEQGMIPGGTQRNFESYANLVSPLSDRQKAILCDQQTSGGLLIAVEPQAVEKIQQIAQQIGSMLFHIGKLFDRAPDKALIEVN.

Sec-16 is a catalytic residue. Position 16 (Sec-16) is a non-standard amino acid, selenocysteine. ATP is bound by residues Lys-19 and 47–49 (TAD). Position 50 (Asp-50) interacts with Mg(2+). ATP contacts are provided by residues Asp-67, Asp-90, and 138–140 (GHS). Asp-90 is a Mg(2+) binding site. Position 226 (Asp-226) interacts with Mg(2+).

The protein belongs to the selenophosphate synthase 1 family. Class I subfamily. Homodimer. It depends on Mg(2+) as a cofactor.

The catalysed reaction is hydrogenselenide + ATP + H2O = selenophosphate + AMP + phosphate + 2 H(+). Its function is as follows. Synthesizes selenophosphate from selenide and ATP. This is Selenide, water dikinase from Haemophilus ducreyi (strain 35000HP / ATCC 700724).